The sequence spans 298 residues: ATP phosphoribosyltransferase (298 aa).

It belongs to the ATP phosphoribosyltransferase family. Long subfamily. The cofactor is Mg(2+).

It localises to the cytoplasm. It carries out the reaction 1-(5-phospho-beta-D-ribosyl)-ATP + diphosphate = 5-phospho-alpha-D-ribose 1-diphosphate + ATP. The protein operates within amino-acid biosynthesis; L-histidine biosynthesis; L-histidine from 5-phospho-alpha-D-ribose 1-diphosphate: step 1/9. Feedback inhibited by histidine. In terms of biological role, catalyzes the condensation of ATP and 5-phosphoribose 1-diphosphate to form N'-(5'-phosphoribosyl)-ATP (PR-ATP). Has a crucial role in the pathway because the rate of histidine biosynthesis seems to be controlled primarily by regulation of HisG enzymatic activity. This Vibrio vulnificus (strain CMCP6) protein is ATP phosphoribosyltransferase.